Reading from the N-terminus, the 560-residue chain is MTQAREYDYIIIGAGSAGNVLATRLTEDPDVQVLLLEAGGPDYRFDFRTQMPAALAYPLQGKRYNWAFETDPEPYMNNRRMECGRGKGLGGSSLINGMCYLRGNALDYDNWAKIPGLEDWNYLQCLPYFKRAETRDIGPNDYHGGDGPVSVATPKEGNNELYGAFIRAGIEAGYPATEDVNGYQQEGFGPMDRTTTPNGRRASTARGYLDIAKQRPNLTIETHATTDVIEFEGKRAVGVSYERKGQAQRVRARREVLLCAGAIASPQILQRSGVGNPEHLEEFDIPVVHELPGVGENLQDHLEMYIQYECKKPISLYPALKWYNQPKIGAEWLFFGKGIGASNQFEAAGFIRTNDQEEWPNLQYHFLPIAISYNGKSAVQAHGFQAHVGSMRSMSRGRIRLTSRDPKAAPSILFNYMSHDKDWQEFRDAIRITREIIEQPTMDEYRGREISPGPNVQSDAELDEFVRQHAETAYHPAGSCKMGSADDAMAVVDGAGRVHGLEGLRVIDASIMPVIATGNLNAPTIMIAEKMADKVRGRDPLPPAKVDYYVANGAPARRRA.

An FAD-binding site is contributed by 8–37; sequence DYIIIGAGSAGNVLATRLTEDPDVQVLLLE. Residue histidine 475 is the Proton acceptor of the active site.

This sequence belongs to the GMC oxidoreductase family. The cofactor is FAD.

The enzyme catalyses choline + A = betaine aldehyde + AH2. It catalyses the reaction betaine aldehyde + NAD(+) + H2O = glycine betaine + NADH + 2 H(+). Its pathway is amine and polyamine biosynthesis; betaine biosynthesis via choline pathway; betaine aldehyde from choline (cytochrome c reductase route): step 1/1. Involved in the biosynthesis of the osmoprotectant glycine betaine. Catalyzes the oxidation of choline to betaine aldehyde and betaine aldehyde to glycine betaine at the same rate. The protein is Oxygen-dependent choline dehydrogenase 1 of Chromohalobacter salexigens (strain ATCC BAA-138 / DSM 3043 / CIP 106854 / NCIMB 13768 / 1H11).